The sequence spans 245 residues: MALIEGVGDEVTVLFSVLACLLVLALAWVSTHTTESTDPLPQSSGTTTPAQPSEAMTAIDSIREEAPGAESPSLRHRGPSAQPEPEAGVTASTPPDSPQEPLLLRLKFLNDSEQVARAWPQDTIGSLKRTQFPGREQQVRLIYQGQLLGDDTQTLGSLHLPPNCVLHCHVSTRVGPPHPPCPPGSEPGPSGLEIGSLLLPLLLLLLLLLWYCQIQYRPFFPLTATLGLAGFTLLLSLLAFAMYRP.

The tract at residues 2–30 (ALIEGVGDEVTVLFSVLACLLVLALAWVS) is required to release iHOPS from membranes. The chain crosses the membrane as a helical span at residues 11-31 (VTVLFSVLACLLVLALAWVST). The span at 34–51 (TESTDPLPQSSGTTTPAQ) shows a compositional bias: polar residues. Residues 34–100 (TESTDPLPQS…ASTPPDSPQE (67 aa)) form a disordered region. 3 positions are modified to phosphoserine: serine 73, serine 97, and serine 126. The Ubiquitin-like domain maps to 102-175 (LLLRLKFLND…LHCHVSTRVG (74 aa)). Transmembrane regions (helical) follow at residues 194–214 (IGSLLLPLLLLLLLLLWYCQI) and 219–239 (FFPLTATLGLAGFTLLLSLLA).

In terms of assembly, interacts with EEF1A1, GRIA2, GRIP1. Interacts with CAMLG, TUBG1. Interacts with NPM1 and CDKN2A; TMUB1 can enhance interaction between NPM1 and CDKN2A and is proposed to bridge the proteins; proposed to be mediated by iHOPS. Interacts with ERLIN2 and AMFR; TMUB1 promotes the interaction of ERLIN2 with AMFR. In terms of processing, processed by regulated intramembrane proteolysis (RIP) in the N-terminus to release iHOPS from membranes.

It is found in the membrane. It localises to the postsynaptic cell membrane. Its subcellular location is the recycling endosome. The protein localises to the cytoplasm. The protein resides in the cytoskeleton. It is found in the microtubule organizing center. It localises to the centrosome. Its subcellular location is the nucleus. The protein localises to the nucleolus. Its function is as follows. Involved in sterol-regulated ubiquitination and degradation of HMG-CoA reductase HMGCR. Involved in positive regulation of AMPA-selective glutamate receptor GRIA2 recycling to the cell surface. Acts as a negative regulator of hepatocyte growth during regeneration. May contribute to the regulation of translation during cell-cycle progression. May contribute to the regulation of cell proliferation. May be involved in centrosome assembly. Modulates stabilization and nucleolar localization of tumor suppressor CDKN2A and enhances association between CDKN2A and NPM1. The polypeptide is Transmembrane and ubiquitin-like domain-containing protein 1 (Tmub1) (Rattus norvegicus (Rat)).